The chain runs to 644 residues: Biosynthetic arginine decarboxylase (644 aa).

The residue at position 100 (Lys100) is an N6-(pyridoxal phosphate)lysine. Residue 282–292 participates in substrate binding; that stretch reads CDVGGGLAIDY.

It belongs to the Orn/Lys/Arg decarboxylase class-II family. SpeA subfamily. Mg(2+) serves as cofactor. Pyridoxal 5'-phosphate is required as a cofactor.

It catalyses the reaction L-arginine + H(+) = agmatine + CO2. Functionally, catalyzes the biosynthesis of agmatine from arginine. This chain is Biosynthetic arginine decarboxylase, found in Gloeobacter violaceus (strain ATCC 29082 / PCC 7421).